The following is a 60-amino-acid chain: U-actitoxin-Avd12b (60 aa).

A signal peptide spans 1–6 (SKEGMS). Positions 7–12 (YEEPEN) are excised as a propeptide. Residues 14 to 56 (EGVACTGQYAESFCLNGGTCRYIQSIGEYYCICVGDYTGHRCE) enclose the EGF-like domain. 3 disulfides stabilise this stretch: Cys-18–Cys-33, Cys-27–Cys-44, and Cys-46–Cys-55.

This sequence belongs to the EGF domain peptide family.

The protein resides in the secreted. It localises to the nematocyst. Its function is as follows. Has both toxic and EGF activity. Its EGF activity consists of rounding cells (morphological change) and inducing tyrosine phosphorylation of the EGFR in A431 cells, but with a lower potency that human EGF. The chain is U-actitoxin-Avd12b from Anemonia viridis (Snakelocks anemone).